Reading from the N-terminus, the 283-residue chain is Pantothenate synthetase (283 aa).

34–41 provides a ligand contact to ATP; it reads MGALHDGH. Catalysis depends on H41, which acts as the Proton donor. Q65 is a (R)-pantoate binding site. Q65 contacts beta-alanine. ATP is bound at residue 152–155; that stretch reads GEKD. Q158 serves as a coordination point for (R)-pantoate. ATP is bound by residues V181 and 189-192; that span reads MSSR.

Belongs to the pantothenate synthetase family. In terms of assembly, homodimer.

The protein resides in the cytoplasm. The catalysed reaction is (R)-pantoate + beta-alanine + ATP = (R)-pantothenate + AMP + diphosphate + H(+). It participates in cofactor biosynthesis; (R)-pantothenate biosynthesis; (R)-pantothenate from (R)-pantoate and beta-alanine: step 1/1. Functionally, catalyzes the condensation of pantoate with beta-alanine in an ATP-dependent reaction via a pantoyl-adenylate intermediate. The chain is Pantothenate synthetase from Rhodopseudomonas palustris (strain BisB18).